Consider the following 253-residue polypeptide: 5-oxoprolinase subunit A (253 aa).

Belongs to the LamB/PxpA family. As to quaternary structure, forms a complex composed of PxpA, PxpB and PxpC.

It carries out the reaction 5-oxo-L-proline + ATP + 2 H2O = L-glutamate + ADP + phosphate + H(+). Its function is as follows. Catalyzes the cleavage of 5-oxoproline to form L-glutamate coupled to the hydrolysis of ATP to ADP and inorganic phosphate. This Bacillus cereus (strain 03BB102) protein is 5-oxoprolinase subunit A.